Consider the following 389-residue polypeptide: Sulfate adenylyltransferase (389 aa).

This sequence belongs to the sulfate adenylyltransferase family.

The enzyme catalyses sulfate + ATP + H(+) = adenosine 5'-phosphosulfate + diphosphate. Its pathway is sulfur metabolism; hydrogen sulfide biosynthesis; sulfite from sulfate: step 1/3. This Deinococcus geothermalis (strain DSM 11300 / CIP 105573 / AG-3a) protein is Sulfate adenylyltransferase.